Here is a 454-residue protein sequence, read N- to C-terminus: MELLKPNRSVLGSGPGPGASLCRSGGPLLNGSGTGNLSCEPPRIRGAGTRELELAIRVTLYAVIFLMSVGGNVLIIVVLGLSRRLRTVTNAFLLSLAVSDLLLAVACMPFTLLPNLMGTFIFGTVVCKAVSYFMGVSVSVSTLSLVAIALERYSAICRPLQARVWQTRSHAARVIVATWMLSGLLMVPYPVYTAVQPAGPRVLQCMHRWPSARVRQTWSVLLLLLLFFVPGVVMAVAYGLISRELYLGLRFDGDSDSESQSRVGSQGGLPGGTGQGPAQANGRCRSETRLAGEDGDGCYVQLPRSRPALEMSALTAPTPGPGSGTRPAQAKLLAKKRVVRMLLVIVVLFFLCWLPVYSANTWRAFDGPGAHRALSGAPISFIHLLTYASACVNPLVYCFMHRRFRQACLDTCTRCCPRPPRARPRPLPDEDPPTPSIASLSRLSYTTISTLGPG.

At 1–57 (MELLKPNRSVLGSGPGPGASLCRSGGPLLNGSGTGNLSCEPPRIRGAGTRELELAIR) the chain is on the extracellular side. Residues Asn7, Asn30, and Asn36 are each glycosylated (N-linked (GlcNAc...) asparagine). Residues 58-79 (VTLYAVIFLMSVGGNVLIIVVL) traverse the membrane as a helical segment. The Cytoplasmic segment spans residues 80-87 (GLSRRLRT). The helical transmembrane segment at 88–109 (VTNAFLLSLAVSDLLLAVACMP) threads the bilayer. Residues 110 to 131 (FTLLPNLMGTFIFGTVVCKAVS) lie on the Extracellular side of the membrane. An intrachain disulfide couples Cys127 to Cys205. The chain crosses the membrane as a helical span at residues 132 to 150 (YFMGVSVSVSTLSLVAIAL). Residues 151 to 170 (ERYSAICRPLQARVWQTRSH) are Cytoplasmic-facing. The chain crosses the membrane as a helical span at residues 171-189 (AARVIVATWMLSGLLMVPY). Over 190-219 (PVYTAVQPAGPRVLQCMHRWPSARVRQTWS) the chain is Extracellular. A helical transmembrane segment spans residues 220–242 (VLLLLLLFFVPGVVMAVAYGLIS). Over 243-340 (RELYLGLRFD…KLLAKKRVVR (98 aa)) the chain is Cytoplasmic. The segment at 257 to 284 (SESQSRVGSQGGLPGGTGQGPAQANGRC) is disordered. Residues 265 to 275 (SQGGLPGGTGQ) show a composition bias toward gly residues. A helical membrane pass occupies residues 341–362 (MLLVIVVLFFLCWLPVYSANTW). The Extracellular portion of the chain corresponds to 363–380 (RAFDGPGAHRALSGAPIS). The chain crosses the membrane as a helical span at residues 381–401 (FIHLLTYASACVNPLVYCFMH). The Cytoplasmic portion of the chain corresponds to 402–454 (RRFRQACLDTCTRCCPRPPRARPRPLPDEDPPTPSIASLSRLSYTTISTLGPG). A lipid anchor (S-palmitoyl cysteine) is attached at Cys415. A disordered region spans residues 422–441 (ARPRPLPDEDPPTPSIASLS).

The protein belongs to the G-protein coupled receptor 1 family.

It localises to the cell membrane. In terms of biological role, receptor for gastrin and cholecystokinin. The CCK-B receptors occur throughout the central nervous system where they modulate anxiety, analgesia, arousal, and neuroleptic activity. This receptor mediates its action by association with G proteins that activate a phosphatidylinositol-calcium second messenger system. This Bos taurus (Bovine) protein is Gastrin/cholecystokinin type B receptor (CCKBR).